We begin with the raw amino-acid sequence, 767 residues long: Protein transport protein Sec23B (767 aa).

At A2 the chain carries N-acetylalanine. Residues C61, C66, C85, and C88 each contribute to the Zn(2+) site. An N6-acetyllysine modification is found at K564. A Gelsolin-like repeat occupies 634–720 (PEPVLLDSSS…EHGGSQARFL (87 aa)).

This sequence belongs to the SEC23/SEC24 family. SEC23 subfamily. COPII is composed of at least five proteins: the Sec23/24 complex, the Sec13/31 complex and Sar1. Interacts with SAR1A.

The protein localises to the cytoplasmic vesicle. The protein resides in the COPII-coated vesicle membrane. It is found in the endoplasmic reticulum membrane. It localises to the cytoplasm. Its subcellular location is the cytosol. Component of the coat protein complex II (COPII) which promotes the formation of transport vesicles from the endoplasmic reticulum (ER). The coat has two main functions, the physical deformation of the endoplasmic reticulum membrane into vesicles and the selection of cargo molecules for their transport to the Golgi complex. This Mus musculus (Mouse) protein is Protein transport protein Sec23B.